The sequence spans 245 residues: Phosphoribosylaminoimidazole-succinocarboxamide synthase (245 aa).

The protein belongs to the SAICAR synthetase family.

It carries out the reaction 5-amino-1-(5-phospho-D-ribosyl)imidazole-4-carboxylate + L-aspartate + ATP = (2S)-2-[5-amino-1-(5-phospho-beta-D-ribosyl)imidazole-4-carboxamido]succinate + ADP + phosphate + 2 H(+). It functions in the pathway purine metabolism; IMP biosynthesis via de novo pathway; 5-amino-1-(5-phospho-D-ribosyl)imidazole-4-carboxamide from 5-amino-1-(5-phospho-D-ribosyl)imidazole-4-carboxylate: step 1/2. The polypeptide is Phosphoribosylaminoimidazole-succinocarboxamide synthase (Nostoc punctiforme (strain ATCC 29133 / PCC 73102)).